A 211-amino-acid polypeptide reads, in one-letter code: Homeobox protein Rhox5 (211 aa).

The tract at residues 38–129 (FFQAGEGRDE…PLRRPGSTQR (92 aa)) is disordered. Gly residues-rich tracts occupy residues 52–62 (GQPGEGAVGTE) and 70–84 (GGEGHFGPGVPGPVG). The segment covering 102–119 (HEPVAEGTESVKSEDKQM) has biased composition (basic and acidic residues). The segment at residues 119–176 (MPLRRPGSTQRRLAELERILLSSGSSSGGRSLIDGWISVCPECRNWFKIRRAAYRRNR) is a DNA-binding region (homeobox; atypical).

Highly expressed in placenta. Lower levels in testis, epididymis, ovary and skeletal muscle.

It localises to the nucleus. Functionally, transcription factor required for differentiation of embryonic stem cells (ESCs) into primordial germ cells. The protein is Homeobox protein Rhox5 (Rhox5) of Rattus norvegicus (Rat).